The following is a 115-amino-acid chain: NAD(P)H-quinone oxidoreductase subunit M (115 aa).

It belongs to the complex I NdhM subunit family. NDH-1 can be composed of about 15 different subunits; different subcomplexes with different compositions have been identified which probably have different functions.

It is found in the cellular thylakoid membrane. It catalyses the reaction a plastoquinone + NADH + (n+1) H(+)(in) = a plastoquinol + NAD(+) + n H(+)(out). The catalysed reaction is a plastoquinone + NADPH + (n+1) H(+)(in) = a plastoquinol + NADP(+) + n H(+)(out). Functionally, NDH-1 shuttles electrons from an unknown electron donor, via FMN and iron-sulfur (Fe-S) centers, to quinones in the respiratory and/or the photosynthetic chain. The immediate electron acceptor for the enzyme in this species is believed to be plastoquinone. Couples the redox reaction to proton translocation, and thus conserves the redox energy in a proton gradient. Cyanobacterial NDH-1 also plays a role in inorganic carbon-concentration. The protein is NAD(P)H-quinone oxidoreductase subunit M of Synechococcus sp. (strain WH7803).